The following is a 176-amino-acid chain: RNA pyrophosphohydrolase (176 aa).

In terms of domain architecture, Nudix hydrolase spans 6-149; that stretch reads GYRPNVGIVI…KRDVYRRVMK (144 aa). Positions 38–59 match the Nudix box motif; it reads GGINPGESAEQAMYRELFEEVG.

Belongs to the Nudix hydrolase family. RppH subfamily. A divalent metal cation serves as cofactor.

In terms of biological role, accelerates the degradation of transcripts by removing pyrophosphate from the 5'-end of triphosphorylated RNA, leading to a more labile monophosphorylated state that can stimulate subsequent ribonuclease cleavage. This chain is RNA pyrophosphohydrolase, found in Salmonella paratyphi C (strain RKS4594).